The sequence spans 120 residues: UPF0231 protein YacL (120 aa).

Belongs to the UPF0231 family.

The chain is UPF0231 protein YacL from Escherichia coli O81 (strain ED1a).